The chain runs to 294 residues: UPF0282 protein APE_0500.1 (294 aa).

Belongs to the UPF0282 family.

The sequence is that of UPF0282 protein APE_0500.1 from Aeropyrum pernix (strain ATCC 700893 / DSM 11879 / JCM 9820 / NBRC 100138 / K1).